Reading from the N-terminus, the 515-residue chain is Maturase K (515 aa).

The protein belongs to the intron maturase 2 family. MatK subfamily.

It localises to the plastid. Its subcellular location is the chloroplast. Its function is as follows. Usually encoded in the trnK tRNA gene intron. Probably assists in splicing its own and other chloroplast group II introns. In Pinus luchuensis (Ryukyu island pine), this protein is Maturase K.